The sequence spans 331 residues: Olfactory receptor 7D11 (331 aa).

The Extracellular portion of the chain corresponds to 1–25 (MEIENHTLITKFLILGLSDDPELQP). Residue asparagine 5 is glycosylated (N-linked (GlcNAc...) asparagine). A helical membrane pass occupies residues 26–46 (ILFGLFLSMYLVTLLGNLLII). At 47–57 (LAVSSDSHLHK) the chain is on the cytoplasmic side. Residues 58–78 (PMYFLLSNLSFIDICFISTTI) traverse the membrane as a helical segment. The Extracellular portion of the chain corresponds to 79-97 (PKMLVNMQSQIKDISYIEC). A disulfide bond links cysteine 97 and cysteine 179. The chain crosses the membrane as a helical span at residues 98-118 (LTQVFFFNIFAGMDNFLLTLM). Residues 119-142 (AYDRFVAICHPLNYTVIMNPRLCA) lie on the Cytoplasmic side of the membrane. A helical membrane pass occupies residues 143–163 (LLILMFWIIMFWVSLIHVLLM). Residues 164 to 196 (NELNFSRGTEIPHFFCELAQVLKVSNSDNHVNN) are Extracellular-facing. Residue asparagine 167 is glycosylated (N-linked (GlcNAc...) asparagine). A helical transmembrane segment spans residues 197 to 217 (VFMYVVTSLLGVIPMTGILMS). The Cytoplasmic portion of the chain corresponds to 218-244 (YSQIFSSLFRMSSTVSKYKAFSTCGSH). Residues 245–265 (LCVVTLFYGSGFGVYFSSSVV) form a helical membrane-spanning segment. The Extracellular portion of the chain corresponds to 266–271 (HSTQRR). Residues 272 to 292 (KVASLMYTVISPMLNPFIYTL) traverse the membrane as a helical segment. Over 293 to 331 (RNKDVKGALGKLFNRVASSPSCINDIRNKLLLRSVRQIL) the chain is Cytoplasmic.

It belongs to the G-protein coupled receptor 1 family.

The protein resides in the cell membrane. Functionally, possible olfactory or taste receptor. The sequence is that of Olfactory receptor 7D11 from Mus musculus (Mouse).